The primary structure comprises 335 residues: Homeobox protein DBX1 (335 aa).

Disordered stretches follow at residues 58–102 and 240–335; these read IPAA…LSPA and KERE…ITVS. Positions 83-95 are enriched in low complexity; sequence GSPGSGSRRGSSP. The homeobox DNA-binding region spans 181 to 240; the sequence is GMLRRAVFSDVQRKALEKTFQKQKYISKPDRKKLASKLGLKDSQVKIWFQNRRMKWRNSK. Low complexity predominate over residues 299-317; sequence GPLPASPAHSSSPGKPSDF. Positions 318–335 are enriched in acidic residues; that stretch reads SDSDEDEEGEEDEEITVS.

The protein belongs to the H2.0 homeobox family.

Its subcellular location is the nucleus. Could have a role in patterning the central nervous system during embryogenesis. Has a key role in regulating the distinct phenotypic features that distinguish two major classes of ventral interneurons, V0 and V1 neurons. Regulates the transcription factor profile, neurotransmitter phenotype, intraspinal migratory path and axonal trajectory of V0 neurons, features that differentiate them from an adjacent set of V1 neurons. The sequence is that of Homeobox protein DBX1 (Dbx1) from Mus musculus (Mouse).